The chain runs to 806 residues: ATP-dependent zinc metalloprotease FTSH 9, chloroplastic (806 aa).

A chloroplast-targeting transit peptide spans 1–62; it reads MTSIELLSPL…SSIQLPQSVP (62 aa). The disordered stretch occupies residues 84-116; that stretch reads SSRTIVNCQEGDQKASSSEGEGKTNKDKGRKQG. The next 2 helical transmembrane spans lie at 133-153 and 271-291; these read IIQAQEIGVMLLQLGIVMFVV and GGFFNSGLIVLFYIAVLAGLL. 369–376 is a binding site for ATP; that stretch reads GLPGTGKT. Residue His-594 coordinates Zn(2+). The active site involves Glu-595. Zn(2+) contacts are provided by His-598 and Asp-677.

In the N-terminal section; belongs to the AAA ATPase family. It in the C-terminal section; belongs to the peptidase M41 family. Requires Zn(2+) as cofactor.

The protein localises to the plastid. It localises to the chloroplast thylakoid membrane. In terms of biological role, probable ATP-dependent zinc metallopeptidase. This Arabidopsis thaliana (Mouse-ear cress) protein is ATP-dependent zinc metalloprotease FTSH 9, chloroplastic (FTSH9).